We begin with the raw amino-acid sequence, 282 residues long: Nucleotide-binding protein Ping_2894 (282 aa).

ATP is bound at residue 8–15 (GRSGSGKT). 56–59 (DIRN) contacts GTP.

The protein belongs to the RapZ-like family.

Displays ATPase and GTPase activities. This Psychromonas ingrahamii (strain DSM 17664 / CCUG 51855 / 37) protein is Nucleotide-binding protein Ping_2894.